Reading from the N-terminus, the 552-residue chain is CTP synthase (552 aa).

The interval 1 to 273 (MSESKKNPET…LTPIARRFNM (273 aa)) is amidoligase domain. Serine 21 contributes to the CTP binding site. Serine 21 contacts UTP. ATP is bound by residues 22-27 (SLGKGI) and aspartate 79. Mg(2+) is bound by residues aspartate 79 and glutamate 147. CTP is bound by residues 154 to 156 (DIE), 194 to 199 (KTKPTQ), and lysine 230. Residues 194–199 (KTKPTQ) and lysine 230 contribute to the UTP site. A Glutamine amidotransferase type-1 domain is found at 298–548 (TIAFVGKYLS…IQKSLELKKV (251 aa)). Glycine 359 is an L-glutamine binding site. The active-site Nucleophile; for glutamine hydrolysis is the cysteine 386. L-glutamine-binding positions include 387 to 390 (LGMQ), glutamate 410, and arginine 478. Catalysis depends on residues histidine 521 and glutamate 523.

The protein belongs to the CTP synthase family. As to quaternary structure, homotetramer.

It catalyses the reaction UTP + L-glutamine + ATP + H2O = CTP + L-glutamate + ADP + phosphate + 2 H(+). It carries out the reaction L-glutamine + H2O = L-glutamate + NH4(+). The enzyme catalyses UTP + NH4(+) + ATP = CTP + ADP + phosphate + 2 H(+). Its pathway is pyrimidine metabolism; CTP biosynthesis via de novo pathway; CTP from UDP: step 2/2. Allosterically activated by GTP, when glutamine is the substrate; GTP has no effect on the reaction when ammonia is the substrate. The allosteric effector GTP functions by stabilizing the protein conformation that binds the tetrahedral intermediate(s) formed during glutamine hydrolysis. Inhibited by the product CTP, via allosteric rather than competitive inhibition. Functionally, catalyzes the ATP-dependent amination of UTP to CTP with either L-glutamine or ammonia as the source of nitrogen. Regulates intracellular CTP levels through interactions with the four ribonucleotide triphosphates. The protein is CTP synthase of Wolinella succinogenes (strain ATCC 29543 / DSM 1740 / CCUG 13145 / JCM 31913 / LMG 7466 / NCTC 11488 / FDC 602W) (Vibrio succinogenes).